Here is a 101-residue protein sequence, read N- to C-terminus: MNATQKKKNEKKTKNPYSHNHVNTKLILPHNTFLTNILFLLGLIKHTNQLTFPSIPHSSAISTLLKQTPLPTRILFLSLCLTPSSASARSSDGIILFPHPS.

This is an uncharacterized protein from Schizosaccharomyces pombe (strain 972 / ATCC 24843) (Fission yeast).